Reading from the N-terminus, the 370-residue chain is High affinity iron permease ftrA (370 aa).

The next 7 helical transmembrane spans lie at 5–25, 52–72, 88–108, 148–168, 179–199, 206–226, and 293–313; these read VFAVPIFFICFRECVETSIIV, VWWGVAIGLFISVCIGAGMIG, LWEGIFSLIASVIITIMGAAL, AMFLLPFITVLREGLEAVVFI, AFPLPVFTGILAGVAIGYLLY, SLQIFLIISTCILYLVAAGLF, and YGSVLSYNLYWIAVIVWFVAM. The interval 335–370 is disordered; sequence RKSAEPGNGEQDVEVSTIPSDLQTESKIPKSGASLV. Over residues 351–360 the composition is skewed to polar residues; that stretch reads TIPSDLQTES.

It belongs to the oxidase-dependent Fe transporter (OFeT) (TC 9.A.10.1) family.

Its subcellular location is the cell membrane. High affinity iron permease; part of the reductive iron assimilatory system (RIA), a siderophore-independent high affinity iron uptake mechanism. The polypeptide is High affinity iron permease ftrA (Aspergillus fumigatus (strain ATCC MYA-4609 / CBS 101355 / FGSC A1100 / Af293) (Neosartorya fumigata)).